A 694-amino-acid chain; its full sequence is Putative bifunctional polynucleotide kinase/RNA ligase (694 aa).

Residues 1–385 (MLHVSRLLAN…TKQALNNKLA (385 aa)) are ligase domain. A bifunctional 5'-OH polynucleotide kinase/polynucleotide 3'-phosphatase region spans residues 394–694 (KQLLVLIGIS…FNVCRDYLEF (301 aa)). Residue 401 to 408 (GISGSGKS) participates in ATP binding.

The enzyme catalyses a 5'-end dephospho-2'-deoxyribonucleoside-DNA + ATP = a 5'-end 5'-phospho-2'-deoxyribonucleoside-DNA + ADP + H(+). It catalyses the reaction ATP + (ribonucleotide)n-3'-hydroxyl + 5'-phospho-(ribonucleotide)m = (ribonucleotide)n+m + AMP + diphosphate.. In terms of biological role, trifunctional enzyme that possesses a bifunctional polynucleotide kinase/phosphatase activity and an ATP-dependent RNA ligase activity. May therefore play a role to evade an RNA damage-based host response. This chain is Putative bifunctional polynucleotide kinase/RNA ligase (PNK/PNL), found in Autographa californica nuclear polyhedrosis virus (AcMNPV).